Here is a 409-residue protein sequence, read N- to C-terminus: LL-diaminopimelate aminotransferase (409 aa).

Substrate is bound by residues Y15 and G42. Pyridoxal 5'-phosphate-binding positions include Y72, 108 to 109, Y132, N186, Y217, and 245 to 247; these read AK and SFS. Substrate is bound by residues K109, Y132, and N186. K248 bears the N6-(pyridoxal phosphate)lysine mark. Pyridoxal 5'-phosphate-binding residues include R256 and N291. 2 residues coordinate substrate: N291 and R385.

This sequence belongs to the class-I pyridoxal-phosphate-dependent aminotransferase family. LL-diaminopimelate aminotransferase subfamily. Homodimer. It depends on pyridoxal 5'-phosphate as a cofactor.

The enzyme catalyses (2S,6S)-2,6-diaminopimelate + 2-oxoglutarate = (S)-2,3,4,5-tetrahydrodipicolinate + L-glutamate + H2O + H(+). The protein operates within amino-acid biosynthesis; L-lysine biosynthesis via DAP pathway; LL-2,6-diaminopimelate from (S)-tetrahydrodipicolinate (aminotransferase route): step 1/1. In terms of biological role, involved in the synthesis of meso-diaminopimelate (m-DAP or DL-DAP), required for both lysine and peptidoglycan biosynthesis. Catalyzes the direct conversion of tetrahydrodipicolinate to LL-diaminopimelate. This is LL-diaminopimelate aminotransferase from Desulfosudis oleivorans (strain DSM 6200 / JCM 39069 / Hxd3) (Desulfococcus oleovorans).